The primary structure comprises 399 residues: MSKTNVVIEQTEKFGAHNYHPLPIVISKAEGVWVHDPEGNKYLDMLSAYSALNQGHRHPRIIQALKDQADKVTLTSRAFYNDQLGEFYEKLSAVTGKEMILPMNTGAEAVETALKAVRRWAYDVKKVPENQAEIIVCEGNFHGRTVTVTSFSSAEEYRRGFGPFTPGFKIIPYGDIEALKQAITPNTAAFMLEPIQGEAGIIIPQEGFLKQAQEVCKANNVLLVSDEIQTGFGRTGKMFASDWENVVPDMYIMGKALGGGVFPISAVAADKEILSVFEPGSHGSTFGGNPLGCAVAVAAMDVLADEGLVQRSLEMGAYFMEKLKEINNPIIKEIRGRGLFIGLELTTAARPYCEKLKELGLLCKETHETTIRFAPPLVISKEDLDWAIDRIKQVLHVTE.

At Lys-255 the chain carries N6-(pyridoxal phosphate)lysine.

Belongs to the class-III pyridoxal-phosphate-dependent aminotransferase family. OAT subfamily. Pyridoxal 5'-phosphate is required as a cofactor.

It is found in the cytoplasm. It catalyses the reaction a 2-oxocarboxylate + L-ornithine = L-glutamate 5-semialdehyde + an L-alpha-amino acid. It participates in amino-acid biosynthesis; L-proline biosynthesis; L-glutamate 5-semialdehyde from L-ornithine: step 1/1. Catalyzes the interconversion of ornithine to glutamate semialdehyde. This is Ornithine aminotransferase from Brevibacillus brevis (strain 47 / JCM 6285 / NBRC 100599).